We begin with the raw amino-acid sequence, 1890 residues long: Proteasome-associated protein ECM29 homolog (1890 aa).

HEAT repeat units lie at residues 6 to 29, 30 to 67, 130 to 167, 226 to 263, 294 to 330, 334 to 354, 355 to 395, 459 to 496, 498 to 523, 524 to 561, 565 to 602, 685 to 722, 776 to 813, 843 to 882, 938 to 975, 980 to 1018, 1118 to 1155, and 1159 to 1196; these read NAEI…EKLE, AAVG…RLSS, DKLF…ICAN, FSDL…MLDF, RVRQ…TNTN, KVLA…ELVS, KVSK…SFPQ, GQQH…EYYA, ARYL…LYGT, SKKD…EQRR, PSFQ…SLEV, AKQL…FGLS, PQFV…AVEI, STKL…GDGE, DDFD…HCSQ, LAKK…ISDS, PYLG…DSKE, and RYYW…RPNG. Residue Ser1213 is modified to Phosphoserine. 8 HEAT repeats span residues 1271-1309, 1313-1350, 1378-1415, 1416-1457, 1497-1534, 1541-1578, 1583-1620, and 1623-1660; these read AVAS…SSGS, PHLA…AQEA, SVLE…IRLG, KEMT…LAKE, DYMD…DVSP, LNLN…RLSS, PDRL…GLDR, and QICS…QLEA. A disordered region spans residues 1680–1702; the sequence is RKESDDEDEPNTSQELSADERNK. At Ser1683 the chain carries Phosphoserine. Thr1691 carries the phosphothreonine modification. At Ser1692 the chain carries Phosphoserine. HEAT repeat units lie at residues 1751-1788 and 1826-1863; these read PVQV…EKKI and KEAL…NLEK.

As to quaternary structure, associated with the proteasome.

The protein resides in the cytoplasm. The protein is Proteasome-associated protein ECM29 homolog of Drosophila melanogaster (Fruit fly).